A 279-amino-acid chain; its full sequence is Formamidopyrimidine-DNA glycosylase (279 aa).

Pro-2 functions as the Schiff-base intermediate with DNA in the catalytic mechanism. The active-site Proton donor is the Glu-3. Residue Lys-58 is the Proton donor; for beta-elimination activity of the active site. Residues His-92, Arg-111, and Arg-153 each coordinate DNA. Residues 238-272 (TVYGKEGQSCLSCSSTIIKTKHSGRSTFYCKTCQY) form an FPG-type zinc finger. The active-site Proton donor; for delta-elimination activity is the Arg-262.

This sequence belongs to the FPG family. Monomer. Zn(2+) serves as cofactor.

It carries out the reaction Hydrolysis of DNA containing ring-opened 7-methylguanine residues, releasing 2,6-diamino-4-hydroxy-5-(N-methyl)formamidopyrimidine.. It catalyses the reaction 2'-deoxyribonucleotide-(2'-deoxyribose 5'-phosphate)-2'-deoxyribonucleotide-DNA = a 3'-end 2'-deoxyribonucleotide-(2,3-dehydro-2,3-deoxyribose 5'-phosphate)-DNA + a 5'-end 5'-phospho-2'-deoxyribonucleoside-DNA + H(+). Functionally, involved in base excision repair of DNA damaged by oxidation or by mutagenic agents. Acts as a DNA glycosylase that recognizes and removes damaged bases. Has a preference for oxidized purines, such as 7,8-dihydro-8-oxoguanine (8-oxoG). Has AP (apurinic/apyrimidinic) lyase activity and introduces nicks in the DNA strand. Cleaves the DNA backbone by beta-delta elimination to generate a single-strand break at the site of the removed base with both 3'- and 5'-phosphates. In Rickettsia massiliae (strain Mtu5), this protein is Formamidopyrimidine-DNA glycosylase.